The primary structure comprises 34 residues: AEKDCIAPGAPCFGTDKPCCNPRAWCSSYANKCL.

3 disulfides stabilise this stretch: C5-C20, C12-C26, and C19-C33.

The protein resides in the secreted. Its function is as follows. Binds reversibly and blocks N-type voltage-gated calcium channels (Cav). This Peirates turpis (Assassin bug) protein is Toxin Ptu1.